The primary structure comprises 298 residues: Ectoine dioxygenase (298 aa).

The span at 1–18 (MLQQAIDRDPVDRIDRYP) shows a compositional bias: basic and acidic residues. Residues 1–26 (MLQQAIDRDPVDRIDRYPTRTAEPAP) are disordered. Glutamine 133 contacts L-ectoine. 3 residues coordinate Fe cation: histidine 150, aspartate 152, and histidine 251.

It belongs to the PhyH family. EctD subfamily. As to quaternary structure, homodimer. Fe(2+) is required as a cofactor.

The enzyme catalyses L-ectoine + 2-oxoglutarate + O2 = 5-hydroxyectoine + succinate + CO2. Its function is as follows. Involved in the biosynthesis of 5-hydroxyectoine, called compatible solute, which helps organisms to survive extreme osmotic stress by acting as a highly soluble organic osmolyte. Catalyzes the 2-oxoglutarate-dependent selective hydroxylation of L-ectoine to yield (4S,5S)-5-hydroxyectoine. The sequence is that of Ectoine dioxygenase from Nocardia farcinica (strain IFM 10152).